A 353-amino-acid polypeptide reads, in one-letter code: Uroporphyrinogen decarboxylase (353 aa).

Substrate is bound by residues 29–33 (RQAGR), Asp78, Tyr154, Ser209, and His322.

It belongs to the uroporphyrinogen decarboxylase family. In terms of assembly, homodimer.

It localises to the cytoplasm. The enzyme catalyses uroporphyrinogen III + 4 H(+) = coproporphyrinogen III + 4 CO2. It participates in porphyrin-containing compound metabolism; protoporphyrin-IX biosynthesis; coproporphyrinogen-III from 5-aminolevulinate: step 4/4. In terms of biological role, catalyzes the decarboxylation of four acetate groups of uroporphyrinogen-III to yield coproporphyrinogen-III. The chain is Uroporphyrinogen decarboxylase from Bacillus velezensis (strain DSM 23117 / BGSC 10A6 / LMG 26770 / FZB42) (Bacillus amyloliquefaciens subsp. plantarum).